We begin with the raw amino-acid sequence, 1873 residues long: Voltage-dependent L-type calcium channel subunit alpha-1S (1873 aa).

Residues 1–23 (MEPSSPQDEGLRKKQPKKPVPEI) are disordered. The Cytoplasmic portion of the chain corresponds to 1 to 51 (MEPSSPQDEGLRKKQPKKPVPEILPRPPRALFCLTLENPLRKACISIVEWK). The stretch at 38–337 (NPLRKACISI…LVLGVLSGEF (300 aa)) is one I repeat. The helical transmembrane segment at 52–70 (PFETIILLTIFANCVALAV) threads the bilayer. At 71–85 (YLPMPEDDNNSLNLG) the chain is on the extracellular side. The N-linked (GlcNAc...) asparagine glycan is linked to N79. Residues 86–106 (LEKLEYFFLIVFSIEAAMKII) traverse the membrane as a helical segment. At 107–115 (AYGFLFHQD) the chain is on the cytoplasmic side. The helical transmembrane segment at 116-136 (AYLRSGWNVLDFTIVFLGVFT) threads the bilayer. Over 137–160 (VILEQVNVIQSHTAPMSSKGAGLD) the chain is Extracellular. The helical transmembrane segment at 161–179 (VKALRAFRVLRPLRLVSGV) threads the bilayer. The Cytoplasmic segment spans residues 180-196 (PSLQVVLNSIFKAMLPL). A helical membrane pass occupies residues 197–218 (FHIALLVLFMVIIYAIIGLELF). Residues 219 to 279 (KGKMHKTCYF…HGITHFDNFG (61 aa)) lie on the Extracellular side of the membrane. 2 cysteine pairs are disulfide-bonded: C226–C254 and C245–C261. N257 carries N-linked (GlcNAc...) asparagine glycosylation. Residues 280 to 301 (FSMLTVYQCITMEGWTDVLYWV) constitute an intramembrane region (pore-forming). Positions 290–293 (TMEG) match the Selectivity filter of repeat I motif. E292 serves as a coordination point for Ca(2+). At 302 to 309 (NDAIGNEW) the chain is on the extracellular side. The helical transmembrane segment at 310–330 (PWIYFVTLILLGSFFILNLVL) threads the bilayer. At 331–432 (GVLSGEFTKE…WKCHDIVKSK (102 aa)) the chain is on the cytoplasmic side. The interval 357–374 (QQLDEDLRGYMSWITQGE) is binding to the beta subunit. Residues S393 and S397 each carry the phosphoserine modification. An II repeat occupies 418–664 (NRIFRWKCHD…VFLAIAVDNL (247 aa)). The chain crosses the membrane as a helical span at residues 433 to 451 (VFYWLVILIVALNTLSIAS). The Extracellular segment spans residues 452–462 (EHHNQPLWLTR). The helical transmembrane segment at 463 to 483 (LQDIANRVLLSLFTTEMLMKM) threads the bilayer. The Cytoplasmic segment spans residues 484–494 (YGLGLRQYFMS). The helical transmembrane segment at 495 to 514 (IFNRFDCFVVCSGILEILLV) threads the bilayer. At 515–523 (ESGAMTPLG) the chain is on the extracellular side. Residues 524 to 542 (ISVLRCIRLLRIFKITKYW) traverse the membrane as a helical segment. The Cytoplasmic portion of the chain corresponds to 543–561 (TSLSNLVASLLNSIRSIAS). The chain crosses the membrane as a helical span at residues 562 to 581 (LLLLLFLFIVIFALLGMQLF). Residues 582–601 (GGRYDFEDTEVRRSNFDNFP) are Extracellular-facing. The segment at residues 602–623 (QALISVFQVLTGEDWTSMMYNG) is an intramembrane region (pore-forming). The Selectivity filter of repeat II motif lies at 612-615 (TGED). Ca(2+) is bound at residue E614. The Extracellular segment spans residues 624–633 (IMAYGGPSYP). A helical transmembrane segment spans residues 634 to 653 (GMLVCIYFIILFVCGNYILL). The Cytoplasmic portion of the chain corresponds to 654–799 (NVFLAIAVDN…VLCHRIVNAT (146 aa)). Disordered stretches follow at residues 675–717 (KAKA…IPTT) and 731–757 (EVKD…LSPR). At S687 the chain carries Phosphoserine; by PKA. A compositionally biased stretch (basic and acidic residues) spans 690-711 (LPDKSEEEKSTMAKKLEQKPKG). Residues 742-751 (PGDDEEDEPE) are compositionally biased toward acidic residues. The tract at residues 747–760 (EDEPEIPLSPRPRP) is interaction with STAC, STAC2 and STAC3 (via SH3 domains). Residues 786–1068 (NKIRVLCHRI…IFVGFVIVTF (283 aa)) form an III repeat. The helical transmembrane segment at 800-818 (WFTNFILLFILLSSAALAA) threads the bilayer. Residues 819-830 (EDPIRADSMRNQ) lie on the Extracellular side of the membrane. A helical transmembrane segment spans residues 831–850 (ILKHFDIGFTSVFTVEIVLK). Topologically, residues 851-866 (MTTYGAFLHKGSFCRN) are cytoplasmic. The helical transmembrane segment at 867-885 (YFNMLDLLVVAVSLISMGL) threads the bilayer. Residues 886 to 892 (ESSAISV) are Extracellular-facing. Residues 893-911 (VKILRVLRVLRPLRAINRA) traverse the membrane as a helical segment. Over 912-930 (KGLKHVVQCMFVAISTIGN) the chain is Cytoplasmic. A helical membrane pass occupies residues 931-950 (IVLVTTLLQFMFACIGVQLF). The Extracellular segment spans residues 951 to 1000 (KGKFFRCTDLSKMTEEECRGYYYVYKDGDPMQIELRHREWVHSDFHFDNV). The cysteines at positions 957 and 968 are disulfide-linked. Residues 988–1077 (REWVHSDFHF…FQEQGETEYK (90 aa)) are dihydropyridine binding. The pore-forming intramembrane region spans 1001-1021 (LSAMMSLFTVSTFEGWPQLLY). Positions 1012 to 1015 (TFEG) match the Selectivity filter of repeat III motif. E1014 is a Ca(2+) binding site. Topologically, residues 1022 to 1038 (KAIDSNAEDVGPIYNNR) are extracellular. A helical membrane pass occupies residues 1039 to 1060 (VEMAIFFIIYIILIAFFMMNIF). The Cytoplasmic segment spans residues 1061 to 1118 (VGFVIVTFQEQGETEYKNCELDKNQRQCVQYALKARPLRCYIPKNPYQYQVWYIVTSS). Residues 1105-1384 (NPYQYQVWYI…LFVAVIMDNF (280 aa)) form an IV repeat. A helical transmembrane segment spans residues 1119 to 1140 (YFEYLMFALIMLNTICLGMQHY). Residue N1141 is glycosylated (N-linked (GlcNAc...) asparagine). Residues 1141–1148 (NQSEQMNH) lie on the Extracellular side of the membrane. Residues 1149 to 1170 (ISDILNVAFTIIFTLEMILKLM) traverse the membrane as a helical segment. The Cytoplasmic segment spans residues 1171 to 1180 (AFKARGYFGD). The helical transmembrane segment at 1181–1200 (PWNVFDFLIVIGSIIDVILS) threads the bilayer. The Extracellular portion of the chain corresponds to 1201-1231 (EIDTFLASSGGLYCLGGGCGNVDPDESARIS). Residues 1232-1250 (SAFFRLFRVMRLIKLLSRA) form a helical membrane-spanning segment. Residues 1251-1268 (EGVRTLLWTFIKSFQALP) lie on the Cytoplasmic side of the membrane. A helical membrane pass occupies residues 1269–1289 (YVALLIVMLFFIYAVIGMQMF). Over 1290–1311 (GKIALVDGTQINRNNNFQTFPQ) the chain is Extracellular. Positions 1312–1330 (AVLLLFRCATGEAWQEILL) form an intramembrane region, pore-forming. Residues 1321–1324 (TGEA) carry the Selectivity filter of repeat IV motif. At 1331 to 1356 (ACSYGKLCDPESDYAPGEEYTCGTNF) the chain is on the extracellular side. Residues 1337–1403 (LCDPESDYAP…LGPHHLDEFK (67 aa)) are dihydropyridine binding. A disulfide bond links C1338 and C1352. The interval 1349 to 1391 (EYTCGTNFAYYYFISFYMLCAFLVINLFVAVIMDNFDYLTRDW) is phenylalkylamine binding. A helical transmembrane segment spans residues 1357 to 1381 (AYYYFISFYMLCAFLVINLFVAVIM). The Cytoplasmic segment spans residues 1382–1873 (DNFDYLTRDW…SQETLIPPRL (492 aa)). Positions 1522 to 1542 (KFYATFLIQEHFRKFMKRQEE) are interaction with calmodulin. S1575 bears the Phosphoserine; by PKA and CAMK2 mark. Phosphoserine; by PKA is present on S1617. The disordered stretch occupies residues 1731 to 1780 (MPRGQAPPAPCQCPRVESSMPEDRKSSTPGSLHEETPHSRSTRENTSRCS). Positions 1751-1776 (PEDRKSSTPGSLHEETPHSRSTRENT) are enriched in basic and acidic residues.

Belongs to the calcium channel alpha-1 subunit (TC 1.A.1.11) family. CACNA1S subfamily. In terms of assembly, component of a calcium channel complex consisting of a pore-forming alpha subunit (CACNA1S) and the ancillary subunits CACNB1 or CACNB2, CACNG1 and CACNA2D1. The channel complex contains alpha, beta, gamma and delta subunits in a 1:1:1:1 ratio, i.e. it contains either CACNB1 or CACNB2. CACNA1S channel activity is modulated by the auxiliary subunits (CACNB1 or CACNB2, CACNG1 and CACNA2D1). Interacts with DYSF and JSRP1. Interacts with RYR1. Interacts with STAC, STAC2 and STAC3 (via their SH3 domains). Interacts with CALM. Post-translationally, the alpha-1S subunit is found in two isoforms in the skeletal muscle: a minor form of 212 kDa containing the complete amino acid sequence, and a major form of 190 kDa derived from the full-length form by post-translational proteolysis close to Phe-1690. In terms of processing, phosphorylated. Phosphorylation by PKA activates the calcium channel. Both the minor and major forms are phosphorylated in vitro by PKA. Phosphorylation at Ser-1575 is involved in beta-adrenergic-mediated regulation of the channel. As to expression, skeletal muscle specific.

The protein localises to the cell membrane. Its subcellular location is the sarcolemma. It localises to the T-tubule. It carries out the reaction Ca(2+)(in) = Ca(2+)(out). Channel activity is blocked by dihydropyridines (DHP), phenylalkylamines, and by benzothiazepines. Functionally, pore-forming, alpha-1S subunit of the voltage-gated calcium channel that gives rise to L-type calcium currents in skeletal muscle. Calcium channels containing the alpha-1S subunit play an important role in excitation-contraction coupling in skeletal muscle via their interaction with RYR1, which triggers Ca(2+) release from the sarcoplasmic reticulum and ultimately results in muscle contraction. Long-lasting (L-type) calcium channels belong to the 'high-voltage activated' (HVA) group. The sequence is that of Voltage-dependent L-type calcium channel subunit alpha-1S (CACNA1S) from Homo sapiens (Human).